The following is a 291-amino-acid chain: UDP-N-acetylenolpyruvoylglucosamine reductase (291 aa).

Residues 22 to 187 (RIGGPARYFK…ASATFQLTKD (166 aa)) form the FAD-binding PCMH-type domain. Arginine 166 is an active-site residue. The Proton donor role is filled by cysteine 214. Residue glutamate 283 is part of the active site.

This sequence belongs to the MurB family. It depends on FAD as a cofactor.

The protein localises to the cytoplasm. The catalysed reaction is UDP-N-acetyl-alpha-D-muramate + NADP(+) = UDP-N-acetyl-3-O-(1-carboxyvinyl)-alpha-D-glucosamine + NADPH + H(+). Its pathway is cell wall biogenesis; peptidoglycan biosynthesis. Its function is as follows. Cell wall formation. This is UDP-N-acetylenolpyruvoylglucosamine reductase from Chlamydia trachomatis serovar A (strain ATCC VR-571B / DSM 19440 / HAR-13).